We begin with the raw amino-acid sequence, 88 residues long: Putative membrane protein insertion efficiency factor (88 aa).

A disordered region spans residues 64–88; that stretch reads GVDPVPKKSSSKKTSSTTACGCGHS.

The protein belongs to the UPF0161 family.

The protein resides in the cell inner membrane. Functionally, could be involved in insertion of integral membrane proteins into the membrane. The protein is Putative membrane protein insertion efficiency factor of Herminiimonas arsenicoxydans.